Reading from the N-terminus, the 421-residue chain is GTPase Obg (421 aa).

An Obg domain is found at 4 to 161 (LHFIDEAFNE…FKIKIQLKVL (158 aa)). The region spanning 162–327 (ADVGLLGFPS…LKYAIKNLLQ (166 aa)) is the OBG-type G domain. Residues 168 to 175 (GFPSVGKS), 193 to 197 (FTTLF), 214 to 217 (DLPG), 281 to 284 (NKMD), and 308 to 310 (SLI) each bind GTP. Residues Ser-175 and Thr-195 each coordinate Mg(2+). The OCT domain occupies 343 to 421 (DLNSETQTFT…ICNYLFDFVI (79 aa)).

Belongs to the TRAFAC class OBG-HflX-like GTPase superfamily. OBG GTPase family. Monomer. Mg(2+) serves as cofactor.

It is found in the cytoplasm. An essential GTPase which binds GTP, GDP and possibly (p)ppGpp with moderate affinity, with high nucleotide exchange rates and a fairly low GTP hydrolysis rate. Plays a role in control of the cell cycle, stress response, ribosome biogenesis and in those bacteria that undergo differentiation, in morphogenesis control. The polypeptide is GTPase Obg (Phytoplasma australiense).